A 136-amino-acid chain; its full sequence is Large ribosomal subunit protein bL17 (136 aa).

This sequence belongs to the bacterial ribosomal protein bL17 family. Part of the 50S ribosomal subunit. Contacts protein L32.

This chain is Large ribosomal subunit protein bL17, found in Rickettsia peacockii (strain Rustic).